The sequence spans 177 residues: Large ribosomal subunit protein uL16m (177 aa).

Belongs to the universal ribosomal protein uL16 family.

The protein localises to the mitochondrion. The protein is Large ribosomal subunit protein uL16m (RPL16) of Brassica napus (Rape).